Here is a 25-residue protein sequence, read N- to C-terminus: Caerin-1.18 (25 aa).

Leu25 carries the post-translational modification Leucine amide.

As to expression, expressed by the skin dorsal glands.

It localises to the secreted. In terms of biological role, shows significant activity against Gram-positive organisms, but is less effective against Gram-negative organisms. The sequence is that of Caerin-1.18 from Ranoidea gracilenta (Dainty green tree frog).